A 317-amino-acid chain; its full sequence is Homoserine kinase (317 aa).

Residue 95 to 105 participates in ATP binding; that stretch reads PHSRGLGSSAA.

This sequence belongs to the GHMP kinase family. Homoserine kinase subfamily.

Its subcellular location is the cytoplasm. It carries out the reaction L-homoserine + ATP = O-phospho-L-homoserine + ADP + H(+). It participates in amino-acid biosynthesis; L-threonine biosynthesis; L-threonine from L-aspartate: step 4/5. Its function is as follows. Catalyzes the ATP-dependent phosphorylation of L-homoserine to L-homoserine phosphate. This Mycolicibacterium smegmatis (strain ATCC 700084 / mc(2)155) (Mycobacterium smegmatis) protein is Homoserine kinase.